Here is a 325-residue protein sequence, read N- to C-terminus: E3 ubiquitin-protein ligase EL5 (325 aa).

Residues 1–29 (MVRGVEQGGPAMDESSSSSSPSPVSAPAG) are disordered. A compositionally biased stretch (low complexity) spans 15–28 (SSSSSSPSPVSAPA). The chain crosses the membrane as a helical span at residues 38-58 (IATVAAVLIVFAALTLAFVLL). The interval 70-105 (TTTSTSGRGRRPRPRRRSGSGGDGGTGGGVDPEVLR) is disordered. The segment covering 77-87 (RGRRPRPRRRS) has biased composition (basic residues). The span at 88–99 (GSGGDGGTGGGV) shows a compositional bias: gly residues. Residues 134–176 (CAVCLAELEDGEEARFLPRCGHGFHAECVDMWLGSHSTCPLCR) form an RING-type; atypical zinc finger. 2 disordered regions span residues 267–289 (GAAG…GDVE) and 303–325 (AATP…HVRN). Residues 268–281 (AAGSTSSCSCATGG) show a composition bias toward low complexity.

The protein localises to the cell membrane. It carries out the reaction S-ubiquitinyl-[E2 ubiquitin-conjugating enzyme]-L-cysteine + [acceptor protein]-L-lysine = [E2 ubiquitin-conjugating enzyme]-L-cysteine + N(6)-ubiquitinyl-[acceptor protein]-L-lysine.. It participates in protein modification; protein ubiquitination. Its function is as follows. Functions as an E3 ubiquitin-protein ligase in cooperation with the E2 ubiquitin conjugating enzymes UBC5A and UBC5B. Involved in root development. Required for the maintenance of cell viability after the initiation of root primordial formation. May mediate the degradation of cytotoxic proteins produced in root cells after the actions of auxin, cytokinin and jasmonic acid. Mediates 'Lys-48'-linked polyubiquitination of MBP in vitro. In Oryza sativa subsp. japonica (Rice), this protein is E3 ubiquitin-protein ligase EL5 (EL5.1).